The chain runs to 222 residues: MGSTVAAALLLFLAAVPAVFAATFKVGDISGWTSNLDYTVWLTGKTFRVGDTLEFVYGLSHSVSVVDKAGYDNCDSSGATQNFADGDTKIDLTTVGTMHFLCPTFGHCKNGMKLAVPVLAAAPSPSTPSSPPSTPSTPSSPPSTPSTPSSPPSPPSPPSPSLPPSSLPPSASPPTNGTPDSETLTPPPAPLPPSLSPNAASKGVMSYGIIGVTMILMYAVMT.

Residues 1–21 (MGSTVAAALLLFLAAVPAVFA) form the signal peptide. Residues 22–120 (ATFKVGDISG…GMKLAVPVLA (99 aa)) enclose the Phytocyanin domain. 4 residues coordinate Cu cation: His61, Cys102, His107, and Met112. A disulfide bridge connects residues Cys74 and Cys108. Residues 121–198 (AAPSPSTPSS…APLPPSLSPN (78 aa)) are disordered. 2 stretches are compositionally biased toward pro residues: residues 125–172 (PSTP…PSAS) and 185–195 (TPPPAPLPPSL). A lipid anchor (GPI-anchor amidated asparagine) is attached at Asn198. A propeptide spans 199–222 (AASKGVMSYGIIGVTMILMYAVMT) (removed in mature form).

It is found in the cell membrane. Probably acts as an electron carrier involved in oxygen activation and/or lignin formation. The protein is Uclacyanin-3 (UCC3) of Arabidopsis thaliana (Mouse-ear cress).